Consider the following 298-residue polypeptide: MTEQAISFAKDFLAGGIAAAISKTAVAPIERVKLLLQVQHASKQIAADKQYKGIVDCIVRIPKEQGVLSFWRGNLANVIRYFPTQALNFAFKDKYKQIFLGGVDKHTQFWRYFAGNLASGGAAGATSLCFVYPLDFARTRLAADVGKSATEREFKGLGDCLVKITKSDGIRGLYQGFNVSVQGIIIYRAAYFGVYGTAKGMLPDPRNTHIVVSWMIAQTVTAVAGVFSYPFDTVRRRMMMQSGRKGADIMYKGTLDCWRKIFKDEGGKAFFKGAWSNVLRGMGGAFVLVLYDELKKVI.

N-acetylmethionine is present on methionine 1. The Mitochondrial intermembrane segment spans residues 1–7 (MTEQAIS). Threonine 2 is subject to N-acetylthreonine; in ADP/ATP translocase 3, N-terminally processed. A Solcar 1 repeat occupies 6–98 (ISFAKDFLAG…FAFKDKYKQI (93 aa)). Residues 8 to 37 (FAKDFLAGGIAAAISKTAVAPIERVKLLLQ) traverse the membrane as a helical segment. The Mitochondrial matrix segment spans residues 38–74 (VQHASKQIAADKQYKGIVDCIVRIPKEQGVLSFWRGN). Lysine 52 is modified (N6,N6,N6-trimethyllysine). Residues 75–99 (LANVIRYFPTQALNFAFKDKYKQIF) form a helical membrane-spanning segment. ADP is bound by residues arginine 80 and lysine 92. The Mitochondrial intermembrane segment spans residues 100 to 109 (LGGVDKHTQF). The residue at position 105 (lysine 105) is an N6-acetyllysine. Residues 110–130 (WRYFAGNLASGGAAGATSLCF) form a helical membrane-spanning segment. 2 Solcar repeats span residues 111-201 (RYFA…AKGM) and 212-297 (VSWM…LKKV). The Mitochondrial matrix segment spans residues 131-178 (VYPLDFARTRLAADVGKSATEREFKGLGDCLVKITKSDGIRGLYQGFN). A helical transmembrane segment spans residues 179 to 199 (VSVQGIIIYRAAYFGVYGTAK). Residues 200 to 210 (GMLPDPRNTHI) lie on the Mitochondrial intermembrane side of the membrane. The helical transmembrane segment at 211-231 (VVSWMIAQTVTAVAGVFSYPF) threads the bilayer. At 232–273 (DTVRRRMMMQSGRKGADIMYKGTLDCWRKIFKDEGGKAFFKG) the chain is on the mitochondrial matrix side. Arginine 235 contacts ADP. The segment at 235-240 (RRRMMM) is important for transport activity. The Nucleotide carrier signature motif signature appears at 235 to 240 (RRRMMM). An N6-acetyllysine modification is found at lysine 268. Residues 274–291 (AWSNVLRGMGGAFVLVLY) form a helical membrane-spanning segment. At 292–298 (DELKKVI) the chain is on the mitochondrial intermembrane side.

It belongs to the mitochondrial carrier (TC 2.A.29) family. As to quaternary structure, monomer. Found in a complex with ARL2, ARL2BP and SLC25A6/ANT3. Post-translationally, trimethylated by ANTKMT at Lys-52.

It is found in the mitochondrion inner membrane. The protein localises to the membrane. It carries out the reaction ADP(in) + ATP(out) = ADP(out) + ATP(in). The enzyme catalyses H(+)(in) = H(+)(out). Its activity is regulated as follows. The matrix-open state (m-state) is inhibited by the membrane-permeable bongkrekic acid (BKA). The cytoplasmic-open state (c-state) is inhibited by the membrane-impermeable toxic inhibitor carboxyatractyloside (CATR). Proton transporter activity is inhibited by ADP:ATP antiporter activity. In terms of biological role, ADP:ATP antiporter that mediates import of ADP into the mitochondrial matrix for ATP synthesis, and export of ATP out to fuel the cell. Cycles between the cytoplasmic-open state (c-state) and the matrix-open state (m-state): operates by the alternating access mechanism with a single substrate-binding site intermittently exposed to either the cytosolic (c-state) or matrix (m-state) side of the inner mitochondrial membrane. In addition to its ADP:ATP antiporter activity, also involved in mitochondrial uncoupling and mitochondrial permeability transition pore (mPTP) activity. Plays a role in mitochondrial uncoupling by acting as a proton transporter: proton transport uncouples the proton flows via the electron transport chain and ATP synthase to reduce the efficiency of ATP production and cause mitochondrial thermogenesis. Proton transporter activity is inhibited by ADP:ATP antiporter activity, suggesting that SLC25A6/ANT3 acts as a master regulator of mitochondrial energy output by maintaining a delicate balance between ATP production (ADP:ATP antiporter activity) and thermogenesis (proton transporter activity). Proton transporter activity requires free fatty acids as cofactor, but does not transport it. Also plays a key role in mPTP opening, a non-specific pore that enables free passage of the mitochondrial membranes to solutes of up to 1.5 kDa, and which contributes to cell death. It is however unclear if SLC25A6/ANT3 constitutes a pore-forming component of mPTP or regulates it. The protein is ADP/ATP translocase 3 of Sus scrofa (Pig).